The primary structure comprises 418 residues: Serine--tRNA ligase (418 aa).

L-serine is bound at residue threonine 231–glutamate 233. Arginine 262–glutamate 264 contacts ATP. Glutamate 285 lines the L-serine pocket. ATP is bound at residue glutamate 349–serine 352. L-serine is bound at residue serine 384.

It belongs to the class-II aminoacyl-tRNA synthetase family. Type-1 seryl-tRNA synthetase subfamily. Homodimer. The tRNA molecule binds across the dimer.

The protein resides in the cytoplasm. It catalyses the reaction tRNA(Ser) + L-serine + ATP = L-seryl-tRNA(Ser) + AMP + diphosphate + H(+). The enzyme catalyses tRNA(Sec) + L-serine + ATP = L-seryl-tRNA(Sec) + AMP + diphosphate + H(+). It functions in the pathway aminoacyl-tRNA biosynthesis; selenocysteinyl-tRNA(Sec) biosynthesis; L-seryl-tRNA(Sec) from L-serine and tRNA(Sec): step 1/1. Its function is as follows. Catalyzes the attachment of serine to tRNA(Ser). Is also able to aminoacylate tRNA(Sec) with serine, to form the misacylated tRNA L-seryl-tRNA(Sec), which will be further converted into selenocysteinyl-tRNA(Sec). The protein is Serine--tRNA ligase of Coprothermobacter proteolyticus (strain ATCC 35245 / DSM 5265 / OCM 4 / BT).